The following is a 151-amino-acid chain: Ribosome maturation factor RimP (151 aa).

This sequence belongs to the RimP family.

It is found in the cytoplasm. In terms of biological role, required for maturation of 30S ribosomal subunits. The sequence is that of Ribosome maturation factor RimP from Shewanella halifaxensis (strain HAW-EB4).